Consider the following 401-residue polypeptide: Argininosuccinate synthase (401 aa).

9–17 (AYSGGLDTS) lines the ATP pocket. Tyr-86 is a binding site for L-citrulline. Gly-116 is an ATP binding site. L-aspartate contacts are provided by Thr-118, Asn-122, and Asp-123. Asn-122 lines the L-citrulline pocket. The L-citrulline site is built by Arg-126, Ser-174, Ser-183, Glu-259, and Tyr-271.

Belongs to the argininosuccinate synthase family. Type 1 subfamily. As to quaternary structure, homotetramer.

The protein localises to the cytoplasm. The enzyme catalyses L-citrulline + L-aspartate + ATP = 2-(N(omega)-L-arginino)succinate + AMP + diphosphate + H(+). It functions in the pathway amino-acid biosynthesis; L-arginine biosynthesis; L-arginine from L-ornithine and carbamoyl phosphate: step 2/3. The polypeptide is Argininosuccinate synthase (Bacillus cytotoxicus (strain DSM 22905 / CIP 110041 / 391-98 / NVH 391-98)).